The following is a 437-amino-acid chain: MVLHYTPHQSAPRNTTFVAEILDLDYQGRGVAKVQGKTWFIENALPQEKVEVRIVDEKRHYGHGISCKILTPHPDRQSAKCAYYAQCGGCQSQHIPIDMQRQAKQQALFQRLQQLQPQATFMPMIVAAPWHYRRRVRLSVRFHPKSKQLAMGLRQRNTQQIVNLQHCDVLEIPLSQLLPKLHLLFSTWSLPKNLGHVELVHADNGIAMLLRHTGNLAQTDRTLLTNFAQQENLMLFVQDDQQITQLHGEAPYYILRDGTKLQFDIRDFIQVNAVVNQKMIDTALEWLELTSNDNVLDLFCGMGNFTLPISRQVNQVVGIEGVGEMVEKAKRNAEQNQCDNVQFYQANLDQPFVQQHWASQHFNKILLDPPRTGAAFALHALCELGAEKILYVSCNPATLVRDTAILLQFNYRLKKVAMIDMFPNTGHLESISLFEKE.

Residues 10–68 (SAPRNTTFVAEILDLDYQGRGVAKVQGKTWFIENALPQEKVEVRIVDEKRHYGHGISCK) form the TRAM domain. Positions 81, 87, 90, and 167 each coordinate [4Fe-4S] cluster. Positions 270, 299, 304, 320, 347, and 368 each coordinate S-adenosyl-L-methionine. The active-site Nucleophile is the Cys394.

It belongs to the class I-like SAM-binding methyltransferase superfamily. RNA M5U methyltransferase family. RlmD subfamily.

It catalyses the reaction uridine(1939) in 23S rRNA + S-adenosyl-L-methionine = 5-methyluridine(1939) in 23S rRNA + S-adenosyl-L-homocysteine + H(+). In terms of biological role, catalyzes the formation of 5-methyl-uridine at position 1939 (m5U1939) in 23S rRNA. In Pasteurella multocida (strain Pm70), this protein is 23S rRNA (uracil(1939)-C(5))-methyltransferase RlmD.